Consider the following 112-residue polypeptide: uncharacterized protein (112 aa).

A helical transmembrane segment spans residues 62–82; the sequence is THSFIFFILFLFIFIFLTFSH.

The protein localises to the membrane. This is an uncharacterized protein from Saccharomyces cerevisiae (strain ATCC 204508 / S288c) (Baker's yeast).